We begin with the raw amino-acid sequence, 147 residues long: Large ribosomal subunit protein bL9 (147 aa).

This sequence belongs to the bacterial ribosomal protein bL9 family.

Functionally, binds to the 23S rRNA. This chain is Large ribosomal subunit protein bL9, found in Clostridium tetani (strain Massachusetts / E88).